A 449-amino-acid polypeptide reads, in one-letter code: Gamma-glutamyl phosphate reductase (449 aa).

Belongs to the gamma-glutamyl phosphate reductase family.

Its subcellular location is the cytoplasm. It carries out the reaction L-glutamate 5-semialdehyde + phosphate + NADP(+) = L-glutamyl 5-phosphate + NADPH + H(+). Its pathway is amino-acid biosynthesis; L-proline biosynthesis; L-glutamate 5-semialdehyde from L-glutamate: step 2/2. In terms of biological role, catalyzes the NADPH-dependent reduction of L-glutamate 5-phosphate into L-glutamate 5-semialdehyde and phosphate. The product spontaneously undergoes cyclization to form 1-pyrroline-5-carboxylate. In Methanococcoides burtonii (strain DSM 6242 / NBRC 107633 / OCM 468 / ACE-M), this protein is Gamma-glutamyl phosphate reductase.